We begin with the raw amino-acid sequence, 486 residues long: Cardiolipin synthase A (486 aa).

Helical transmembrane passes span threonine 3–valine 23 and methionine 38–phenylalanine 58. PLD phosphodiesterase domains are found at residues methionine 219 to arginine 246 and lysine 399 to serine 426. Catalysis depends on residues histidine 224, lysine 226, aspartate 231, histidine 404, lysine 406, and aspartate 411.

This sequence belongs to the phospholipase D family. Cardiolipin synthase subfamily. ClsA sub-subfamily.

It localises to the cell inner membrane. It carries out the reaction 2 a 1,2-diacyl-sn-glycero-3-phospho-(1'-sn-glycerol) = a cardiolipin + glycerol. Functionally, catalyzes the reversible phosphatidyl group transfer from one phosphatidylglycerol molecule to another to form cardiolipin (CL) (diphosphatidylglycerol) and glycerol. The protein is Cardiolipin synthase A of Pectobacterium carotovorum subsp. carotovorum (strain PC1).